Reading from the N-terminus, the 391-residue chain is Putative gustatory receptor 36b (391 aa).

Residues 1–4 lie on the Cytoplasmic side of the membrane; the sequence is MVDW. The chain crosses the membrane as a helical span at residues 5–25; it reads VVLLLKAVHIYCYLIGLSNFE. At 26-39 the chain is on the extracellular side; it reads FDCRTGRVFKSRRC. A helical membrane pass occupies residues 40–60; the sequence is TIYAFMANIFILITIIYNFTA. The Cytoplasmic segment spans residues 61-74; the sequence is HGDTNLLFQSANKL. The chain crosses the membrane as a helical span at residues 75–95; that stretch reads HEYVIIIMSGLKIVAGLITVL. The Extracellular portion of the chain corresponds to 96 to 127; sequence NRWLQRGQMMQLVKDVIRLYMINPQLKSMIRW. A helical membrane pass occupies residues 128 to 148; the sequence is GILLKAFISFAIELLQVTLSV. The Cytoplasmic portion of the chain corresponds to 149–165; it reads DALDRQGTAEMMGLLVK. Residues 166 to 186 form a helical membrane-spanning segment; sequence LCVSFIMNLAISQHFLVILLI. Residues 187–284 are Extracellular-facing; that stretch reads RAQYRIMNAK…YKYGPHNLKL (98 aa). The chain crosses the membrane as a helical span at residues 285–305; that stretch reads SAKTSIIVCILITLFYLDALV. Residues 306–363 lie on the Cytoplasmic side of the membrane; the sequence is NCNNMLRVLDHHKDFLGLLEERTVFASSLDIRLEESFESLQLQLARNPLKINVMGMFP. A helical transmembrane segment spans residues 364–384; sequence ITRGSTAAMCASVIVNSIFLI. Residues 385–391 lie on the Extracellular side of the membrane; the sequence is QFDMEFF.

The protein belongs to the insect chemoreceptor superfamily. Gustatory receptor (GR) family. Gr22e subfamily. As to expression, expressed in neurons of the terminal external chemosensory organ of larvae.

It localises to the cell membrane. In terms of biological role, probable gustatory receptor which mediates acceptance or avoidance behavior, depending on its substrates. The protein is Putative gustatory receptor 36b (Gr36b) of Drosophila melanogaster (Fruit fly).